The sequence spans 141 residues: Small ribosomal subunit protein uS19 (141 aa).

It belongs to the universal ribosomal protein uS19 family.

Functionally, protein S19 forms a complex with S13 that binds strongly to the 16S ribosomal RNA. This is Small ribosomal subunit protein uS19 from Halorubrum lacusprofundi (strain ATCC 49239 / DSM 5036 / JCM 8891 / ACAM 34).